The primary structure comprises 537 residues: Leucine-rich repeat LGI family member 4 (537 aa).

The signal sequence occupies residues 1 to 19 (MGGAGILLFLLAWAGAGVA). LRR repeat units follow at residues 53–74 (TLLS…SFLK), 77–98 (SLHL…AFIG), 101–122 (YLQY…ALRG), and 125–146 (SLTH…LFRG). The LRRCT domain maps to 158-208 (NPFQCDCRVLWLLQWMPTVNASVGTGACAGPPAVAQIQLNHLDPKKFKCRA). Asn-177 is a glycosylation site (N-linked (GlcNAc...) asparagine). EAR repeat units lie at residues 210–252 (ELSW…VWDY), 256–298 (RFRP…SRSS), 302–349 (RLTP…CRDG), 351–394 (GFYP…HWVG), 396–439 (RFER…RWDG), 441–483 (MFRL…RFES), and 487–532 (ILEP…QHHE).

As to quaternary structure, can bind to ADAM11, ADAM22 and ADAM23. As to expression, brain. Expressed in the entire developing peripheral nerves. Strongly expressed in the trigeminal nerve and ganglion and particularly abundant in the boundary cap cells - a transient population of cells that contributes to the Schwann cell population of the dorsal root nerve.

The protein localises to the secreted. In terms of biological role, component of Schwann cell signaling pathway(s) that controls axon segregation and myelin formation. This Mus musculus (Mouse) protein is Leucine-rich repeat LGI family member 4 (Lgi4).